A 96-amino-acid polypeptide reads, in one-letter code: Protein CLAVATA 3 (96 aa).

Positions 1 to 21 (MDSKSFLLLLLLFCFLFLHDA) are cleaved as a signal peptide. Positions 68 to 96 (ELRTVPSGPDPLHHHVNPPRQPRNNFQLP) are disordered. Residues P73 and P76 each carry the hydroxyproline modification. Residue P76 is glycosylated (O-linked (Ara...) hydroxyproline).

The protein belongs to the CLV3/ESR signal peptide family. Interacts with the extracellular leucine-rich repeat region of CLV1. Interacts with CLV2. CLV3-derived CLE peptides interacts with a tetrameric complex made of two CLV2/CRN heterodimers. Post-translationally, the MCLV3 peptide contains two hydroxyprolines, but hydroxylation had no direct effect on MCLV3 activity. In terms of processing, the O-glycosylation (arabinosylation) of the hydroxyproline P-76 enhances binding affinity of the MCLV3 peptide for its receptor. In terms of tissue distribution, first detected in heart stage embryos in a patch of cells between the developing cotyledons. In vegetative and inflorescence meristems, expressed in a small cone of cells at the meristem apex.

It is found in the secreted. The protein resides in the extracellular space. Functionally, extracellular signal that regulates meristem maintenance. Acts with CLV1 as a ligand-receptor pair in a signal transduction pathway coordinating growth between adjacent meristematic regions and controlling the balance between meristem cell proliferation and differentiation. In terms of biological role, the secreted peptide MCLV3 activates a signal transduction cascade to restrict WUSCHEL (WUS) expression, inducing shoot and root meristem consumption as cells differentiated into other organs. This Arabidopsis thaliana (Mouse-ear cress) protein is Protein CLAVATA 3.